Reading from the N-terminus, the 243-residue chain is Sugar fermentation stimulation protein homolog (243 aa).

This sequence belongs to the SfsA family.

The protein is Sugar fermentation stimulation protein homolog of Lacticaseibacillus casei (strain BL23) (Lactobacillus casei).